A 264-amino-acid chain; its full sequence is Major prion protein (264 aa).

Residues 1–24 (MVKSHIGSWILVLFVAMWSDVGLC) form the signal peptide. Residues 25 to 241 (KKRPKPGGGW…ESEAYYQRGA (217 aa)) form an interaction with GRB2, ERI3 and SYN1 region. The disordered stretch occupies residues 28–118 (PKPGGGWNTG…QWNKPSKPKT (91 aa)). 6 tandem repeats follow at residues 54–62 (SQGGGGWGQ), 63–70 (PHGGGWGQ), 71–78 (PHGGGWGQ), 79–86 (PHGGGWGQ), 87–94 (PHGGGWGQ), and 95–103 (PHGGGGWGQ). The 6 X 8 AA tandem repeats of P-H-G-G-G-W-G-Q stretch occupies residues 54–103 (SQGGGGWGQPHGGGWGQPHGGGWGQPHGGGWGQPHGGGWGQPHGGGGWGQ). The segment covering 55–107 (QGGGGWGQPHGGGWGQPHGGGWGQPHGGGWGQPHGGGWGQPHGGGGWGQGGTH) has biased composition (gly residues). Cu(2+) contacts are provided by His-72, Gly-73, Gly-74, His-80, Gly-81, Gly-82, His-88, Gly-89, Gly-90, His-96, Gly-98, and Gly-99. Residues Cys-190 and Cys-225 are joined by a disulfide bond. Asn-192 and Asn-208 each carry an N-linked (GlcNAc...) asparagine glycan. Ala-241 carries GPI-anchor amidated alanine lipidation. Residues 242 to 264 (SVILFSSPPVILLISFLIFLIVG) constitute a propeptide, removed in mature form.

Belongs to the prion family. Monomer and homodimer. Has a tendency to aggregate into amyloid fibrils containing a cross-beta spine, formed by a steric zipper of superposed beta-strands. Soluble oligomers may represent an intermediate stage on the path to fibril formation. Copper binding may promote oligomerization. Interacts with GRB2, APP, ERI3/PRNPIP and SYN1. Mislocalized cytosolically exposed PrP interacts with MGRN1; this interaction alters MGRN1 subcellular location and causes lysosomal enlargement. Interacts with KIAA1191.

The protein localises to the cell membrane. Its subcellular location is the golgi apparatus. Its primary physiological function is unclear. Has cytoprotective activity against internal or environmental stresses. May play a role in neuronal development and synaptic plasticity. May be required for neuronal myelin sheath maintenance. May play a role in iron uptake and iron homeostasis. Soluble oligomers are toxic to cultured neuroblastoma cells and induce apoptosis (in vitro). Association with GPC1 (via its heparan sulfate chains) targets PRNP to lipid rafts. Also provides Cu(2+) or Zn(2+) for the ascorbate-mediated GPC1 deaminase degradation of its heparan sulfate side chains. The protein is Major prion protein (PRNP) of Tragelaphus imberbis (Lesser kudu).